A 231-amino-acid chain; its full sequence is MGNSVMEKIKGGLVVSCQALEDEPLHSAFIMSKMALAAVQGGAVGIRANTAKDIRAIQSEIDVPIIGIYKKDYDDSDVFITPTLEEVREICETGVEIVAMDATTRKRPHNEDLKDILNAIRKEFPNTLFMADTGSIEDVYYADSLGFDLIGTTLYGYTEETANKNISDDDFSHLKEVLKSTKRPVIAEGKIDSPSKARQVLTLGCYAVVVGGAVTRPQEITTRFTNEIKKI.

Belongs to the NanE family.

It carries out the reaction an N-acyl-D-glucosamine 6-phosphate = an N-acyl-D-mannosamine 6-phosphate. It participates in amino-sugar metabolism; N-acetylneuraminate degradation; D-fructose 6-phosphate from N-acetylneuraminate: step 3/5. Its function is as follows. Converts N-acetylmannosamine-6-phosphate (ManNAc-6-P) to N-acetylglucosamine-6-phosphate (GlcNAc-6-P). In Listeria monocytogenes serotype 4b (strain F2365), this protein is Putative N-acetylmannosamine-6-phosphate 2-epimerase.